The primary structure comprises 132 residues: Histone H2A.1 (132 aa).

Position 2 is an N-acetylserine (Ser-2). 2 positions are modified to N6-acetyllysine: Lys-5 and Lys-8. 2 positions are modified to N6-succinyllysine: Lys-14 and Lys-22. Residue Gln-106 is modified to N5-methylglutamine. Lys-120 carries the N6-malonyllysine; alternate modification. Lys-127 participates in a covalent cross-link: Glycyl lysine isopeptide (Lys-Gly) (interchain with G-Cter in SUMO). Phosphoserine is present on Ser-129. The [ST]-Q motif motif lies at 129–130 (SQ).

It belongs to the histone H2A family. As to quaternary structure, the nucleosome is a histone octamer containing two molecules each of H2A, H2B, H3 and H4 assembled in one H3-H4 heterotetramer and two H2A-H2B heterodimers. The octamer wraps approximately 147 bp of DNA. Post-translationally, phosphorylated to form H2AS128ph (gamma-H2A) in response to DNA double-strand breaks (DSBs) generated by exogenous genotoxic agents and by stalled replication forks. Phosphorylation is dependent on the DNA damage checkpoint kinases MEC1/ATR and TEL1/ATM, spreads on either side of a detected DSB site and may mark the surrounding chromatin for recruitment of proteins required for DNA damage signaling and repair. Gamma-H2A interacts with ARP4, a shared component of the NuA4 histone acetyltransferase complex and the INO80 and SWR1 chromatin remodeling complexes, and serves to recruit first NuA4, mediating histone H4 acetylation, and subsequently the INO80/SWR1 complexes, facilitating DNA resection, to DSB sites. Gamma-H2A is required for sequestering cohesin around the break site, which is important for efficient post-replicative double-strand break repair by homologous recombination, holding the damaged chromatid close to its undamaged sister template. Gamma-H2A is removed from the DNA prior to the strand invasion-primer extension step of the repair process and subsequently dephosphorylated by PPH3, a component of the histone H2A phosphatase complex (HTP-C). Dephosphorylation is necessary for efficient recovery from the DNA damage checkpoint. In terms of processing, N-acetylated by NAT4. Acetylated by ESA1, a component of the NuA4 histone acetyltransferase (HAT) complex, to form H2AK4ac and H2AK7ac. Post-translationally, glutamine methylation at Gln-106 (H2AQ105me) by NOP1 is specifically dedicated to polymerase I. It is present at 35S ribosomal DNA locus and impairs binding of the FACT complex. In terms of processing, sumoylated to from H2AK126su. May lead to transcriptional repression.

The protein resides in the nucleus. It localises to the chromosome. In terms of biological role, core component of nucleosome which plays a central role in DNA double strand break (DSB) repair. Nucleosomes wrap and compact DNA into chromatin, limiting DNA accessibility to the cellular machineries which require DNA as a template. Histones thereby play a central role in transcription regulation, DNA repair, DNA replication and chromosomal stability. DNA accessibility is regulated via a complex set of post-translational modifications of histones, also called histone code, and nucleosome remodeling. This Saccharomyces cerevisiae (strain ATCC 204508 / S288c) (Baker's yeast) protein is Histone H2A.1 (HTA1).